The following is a 790-amino-acid chain: MAATTANPEMTSDVPPLGPAIASGNPGPGIQGGGAIVQRAIKRRPGLDFDDDGEGNSKFLRCDDDQMSNDKERFARSDDEQSSADKERLARENHSEIERRRRNKMTAYITELSDMVPTCSALARKPDKLTILRMAVSHMKSLRGTGNTSTDGTYKPSFLTDQELKHLILEAADGFLFIVSCETGRVVYVSDSVTPVLNQPQSEWFGSTLYDQVHPDDVDKLREQLSTSENALTGRILDLKTGTVKKEGQQSSMRMCMGSRRSFICRMRCGNSSVDSVSMNRLSFVRNRCRNGLGSAKDGEPHFVVVHCTGYIKAWPPAGVSLPDDDPEAGQGSKFCLVAIGRLQVTSSPNCTDMSNVCQPTEFISRHNIEGIFTFVDHRCVATVGYQPQELLGKNIVEFCHPEDQQLLRDSFQQVVKLKGQVLSVMFRFRSKNREWLWVRTSSFTFQNPYSDEIEYIICTNTNVKNSSQEPRPSLSNTIQRPQLGPTANLSLEMGSGQLAPRQQQQQTELDVVPGRDGLTSCNHSQVSVQPVTTTGPEHSKPLEKSESLFAQDRDPRFSEIYSNISTDQSKGISSSTVPATQQLFSQGNTFPPTPRPAENFRNSGLAPPVTIVQPSTSAGQMLAQISRHSNPTQGAAPAWTPSTRPGFSAQQVVTEATAKTRSSQFGVGSFQTPSSFSPMSLPGASTASPGAAAYPSLTNRGSNFAPETGQTAGQFQTRTAEGVGVWPQWQGQQSHHRSSSNEQHVQQPSAQQPGQPEVFQEMLSMLGDQSNSYNNEEFPDLTMFPSFSE.

Polar residues predominate over residues 1-10 (MAATTANPEM). The interval 1 to 96 (MAATTANPEM…ERLARENHSE (96 aa)) is disordered. Alanine 2 is modified (N-acetylalanine). Positions 26–35 (PGPGIQGGGA) are enriched in gly residues. Lysine 58 is covalently cross-linked (Glycyl lysine isopeptide (Lys-Gly) (interchain with G-Cter in SUMO2)). Residues 60–96 (LRCDDDQMSNDKERFARSDDEQSSADKERLARENHSE) are compositionally biased toward basic and acidic residues. Serine 77 bears the Phosphoserine mark. A DNA-binding region spans residues 88-128 (RLARENHSEIERRRRNKMTAYITELSDMVPTCSALARKPDK). Residues 89–142 (LARENHSEIERRRRNKMTAYITELSDMVPTCSALARKPDKLTILRMAVSHMKSL) form the bHLH domain. The segment at 112–168 (LSDMVPTCSALARKPDKLTILRMAVSHMKSLRGTGNTSTDGTYKPSFLTDQELKHLI) is required for heterodimer formation with HIF1A. The interval 112 to 264 (LSDMVPTCSA…MCMGSRRSFI (153 aa)) is required for heterodimer formation with EPAS1. PAS domains lie at 161-235 (DQEL…LTGR) and 349-419 (PNCT…VKLK). The segment at 167-171 (LILEA) is mediates the transcription activity and dimerization of the AHR:ARNT complex. The 44-residue stretch at 424-467 (SVMFRFRSKNREWLWVRTSSFTFQNPYSDEIEYIICTNTNVKNS) folds into the PAC domain. Polar residues-rich tracts occupy residues 465-490 (KNSS…TANL), 520-537 (TSCN…TTGP), and 661-679 (TRSS…SFSP). Disordered stretches follow at residues 465 to 492 (KNSS…NLSL), 514 to 543 (PGRD…SKPL), 661 to 716 (TRSS…AGQF), and 728 to 790 (PQWQ…SFSE). The span at 683 to 697 (PGASTASPGAAAYPS) shows a compositional bias: low complexity. Residues 741-755 (SNEQHVQQPSAQQPG) show a composition bias toward polar residues.

In terms of assembly, monomer. Homodimer only upon binding to a DNA. Efficient DNA binding requires dimerization with another bHLH protein. Interacts with TACC3. Interacts with HIF1A, EPAS1, NPAS1 and NPAS3; forms a heterodimer that binds core DNA sequence 5'-TACGTG-3' within the hypoxia response element (HRE) of target gene promoters. Forms a heterodimer with AHRR, as well as with other bHLH proteins. Interacts with NOCA7. Interacts with TACC3. Interacts with AHR; the heterodimer ARNT:AHR binds to core DNA sequence 5'-TGCGTG-3' within the dioxin response element (DRE) of target gene promoters and activates their transcription. Interacts with SIM1 and NPAS4.

The protein localises to the nucleus. Its function is as follows. Required for activity of the AHR. Upon ligand binding, AHR translocates into the nucleus, where it heterodimerizes with ARNT and induces transcription by binding to xenobiotic response elements (XRE). Not required for the ligand-binding subunit to translocate from the cytosol to the nucleus after ligand binding. The complex initiates transcription of genes involved in the regulation of a variety of biological processes, including angiogenesis, hematopoiesis, drug and lipid metabolism, cell motility and immune modulation. The heterodimer binds to core DNA sequence 5'-TACGTG-3' within the hypoxia response element (HRE) of target gene promoters and functions as a transcriptional regulator of the adaptive response to hypoxia. The heterodimer ARNT:AHR binds to core DNA sequence 5'-TGCGTG-3' within the dioxin response element (DRE) of target gene promoters and activates their transcription. The chain is Aryl hydrocarbon receptor nuclear translocator (ARNT) from Bos taurus (Bovine).